The following is a 332-amino-acid chain: Glycerol-3-phosphate dehydrogenase [NAD(P)+] (332 aa).

Positions 11, 12, 32, and 106 each coordinate NADPH. Sn-glycerol 3-phosphate-binding residues include Lys106, Gly137, and Ser139. Ala141 contacts NADPH. Sn-glycerol 3-phosphate-binding residues include Lys192, Asp245, Ser255, Arg256, and Asn257. Lys192 functions as the Proton acceptor in the catalytic mechanism. Arg256 is an NADPH binding site. Residues Val280 and Glu282 each contribute to the NADPH site.

Belongs to the NAD-dependent glycerol-3-phosphate dehydrogenase family.

It localises to the cytoplasm. The catalysed reaction is sn-glycerol 3-phosphate + NAD(+) = dihydroxyacetone phosphate + NADH + H(+). It carries out the reaction sn-glycerol 3-phosphate + NADP(+) = dihydroxyacetone phosphate + NADPH + H(+). It participates in membrane lipid metabolism; glycerophospholipid metabolism. Functionally, catalyzes the reduction of the glycolytic intermediate dihydroxyacetone phosphate (DHAP) to sn-glycerol 3-phosphate (G3P), the key precursor for phospholipid synthesis. This is Glycerol-3-phosphate dehydrogenase [NAD(P)+] from Macrococcus caseolyticus (strain JCSC5402) (Macrococcoides caseolyticum).